We begin with the raw amino-acid sequence, 525 residues long: MDPSSKSPDDDDLRPEAEAARRPQPQPQPREWRFAQVFGERAAGEDVQEVDIISAIEFDKSGDHLATGDRGGRVVLFERTDSRDSASRSELERQDYPIARHPEFRYKTEFQSHEPEFDYLKSLEIEEKINKIKWCQTANNALFLLSTNDKTIKYWKVQERKVKRISVMNLNTSQSSGNGTTSSSSSSSSRAILPNGGCSEKLYNFPNNDLLFPPGGCTSLRLPVVVTGQDLNLVPRCRRVYSHAHDYHINSISNNSDGETYISADDLRINLWNLEISNQSFNIVDVKPANMEDLTEVITCAEFHPTHCNTLAYSSSKGSIRLIDLRQSALCDNHAKLFEEHEAPGSRSFFTEIIASVSDIKFARDGRHILSRDYMTLKLWDINMDSGPVATFQVHEYLRPKLCDLYENDSIFDKFECCLSGDGLRVATGSYSNLFRVFGCTPGSAEATTLEASRNPMRRQVANPTRPARTLTSLTRAVRRGGENPGVDANGNSYDLSTKLLHLAWHPTENSIACAAANSLYMYYA.

The disordered stretch occupies residues 1–30 (MDPSSKSPDDDDLRPEAEAARRPQPQPQPR). 2 WD repeats span residues 48–87 (QEVDIISAIEFDKSGDHLATGDRGGRVVLFERTDSRDSAS) and 124–165 (EIEE…VKRI). The disordered stretch occupies residues 169–191 (NLNTSQSSGNGTTSSSSSSSSRA). A compositionally biased stretch (low complexity) spans 171 to 189 (NTSQSSGNGTTSSSSSSSS). 4 WD repeats span residues 244–282 (AHDYHINSISNNSDGETYISADDLRINLWNLEISNQSFN), 293–333 (DLTE…LCDN), 352–390 (EIIASVSDIKFARDGRHILSRDYMTLKLWDINMDSGPVA), and 495–525 (DLSTKLLHLAWHPTENSIACAAANSLYMYYA).

It belongs to the phosphatase 2A regulatory subunit B family. In terms of assembly, PP2A consists of a common heteromeric enzyme, composed of a catalytic subunit (subunits C), a constant regulatory subunit (subunit A), and a variety of regulatory subunits such as subunits B (the R2/B/PR55/B55, R3/B''/PR72/PR130/PR59 and R5/B'/B56 families).

Its function is as follows. The B regulatory subunit may modulate substrate selectivity and catalytic activity, and may also direct the localization of the catalytic enzyme to a particular subcellular compartment. The protein is Serine/threonine protein phosphatase 2A 55 kDa regulatory subunit B beta isoform of Oryza sativa subsp. japonica (Rice).